We begin with the raw amino-acid sequence, 402 residues long: Acetate kinase (402 aa).

Position 13 (Asn-13) interacts with Mg(2+). Lys-20 provides a ligand contact to ATP. Substrate is bound at residue Arg-94. The Proton donor/acceptor role is filled by Asp-151. Residues 211–215 (HLGNG), 285–287 (DFR), and 333–337 (GVGEN) contribute to the ATP site. Glu-387 contacts Mg(2+).

The protein belongs to the acetokinase family. In terms of assembly, homodimer. The cofactor is Mg(2+). Mn(2+) serves as cofactor.

Its subcellular location is the cytoplasm. It catalyses the reaction acetate + ATP = acetyl phosphate + ADP. It functions in the pathway metabolic intermediate biosynthesis; acetyl-CoA biosynthesis; acetyl-CoA from acetate: step 1/2. Its function is as follows. Catalyzes the formation of acetyl phosphate from acetate and ATP. Can also catalyze the reverse reaction. This chain is Acetate kinase, found in Nocardia farcinica (strain IFM 10152).